The following is a 104-amino-acid chain: uncharacterized protein (104 aa).

This is an uncharacterized protein from Acidianus two-tailed virus (ATV).